Consider the following 514-residue polypeptide: Cytochrome P450 94A1 (514 aa).

The helical transmembrane segment at 7–29 threads the bilayer; sequence EVLLPYLLPLLLLILPTTIFFLT. Cys-458 contributes to the heme binding site.

Belongs to the cytochrome P450 family. Requires heme as cofactor.

Its subcellular location is the endoplasmic reticulum membrane. In terms of biological role, catalyzes the omega-hydroxylation of various fatty acids (FA) from 10 to 18 carbon atoms. The substrate specificity is higher for laurate &gt; palmitate &gt; myristate &gt; linolenate &gt; linoleate &gt; oleate &gt; caprate. May play a minor role in cutin synthesis and could be involved in plant defense. This chain is Cytochrome P450 94A1 (CYP94A1), found in Vicia sativa (Spring vetch).